The following is a 430-amino-acid chain: Adenylosuccinate synthetase (430 aa).

Residues 12–18 and 40–42 contribute to the GTP site; these read GDEGKGK and GHT. The active-site Proton acceptor is the D13. Residues D13 and G40 each contribute to the Mg(2+) site. IMP-binding positions include 13–16, 38–41, T129, R143, Q224, T239, and R303; these read DEGK and NAGH. H41 serves as the catalytic Proton donor. 299 to 305 serves as a coordination point for substrate; that stretch reads TVSNRER. Residues R305, 331-333, and 413-415 each bind GTP; these read KLD and STG.

It belongs to the adenylosuccinate synthetase family. Homodimer. It depends on Mg(2+) as a cofactor.

Its subcellular location is the cytoplasm. It carries out the reaction IMP + L-aspartate + GTP = N(6)-(1,2-dicarboxyethyl)-AMP + GDP + phosphate + 2 H(+). It participates in purine metabolism; AMP biosynthesis via de novo pathway; AMP from IMP: step 1/2. Plays an important role in the de novo pathway of purine nucleotide biosynthesis. Catalyzes the first committed step in the biosynthesis of AMP from IMP. The protein is Adenylosuccinate synthetase of Ehrlichia ruminantium (strain Welgevonden).